The primary structure comprises 262 residues: Type III pantothenate kinase (262 aa).

9–16 (DIGNTNVK) is an ATP binding site. Substrate contacts are provided by residues Tyr-103 and 110–113 (GADR). Asp-112 serves as the catalytic Proton acceptor. Position 134 (Asp-134) interacts with K(+). Thr-137 contributes to the ATP binding site. Substrate is bound at residue Thr-190.

Belongs to the type III pantothenate kinase family. In terms of assembly, homodimer. Requires NH4(+) as cofactor. It depends on K(+) as a cofactor.

It localises to the cytoplasm. It catalyses the reaction (R)-pantothenate + ATP = (R)-4'-phosphopantothenate + ADP + H(+). Its pathway is cofactor biosynthesis; coenzyme A biosynthesis; CoA from (R)-pantothenate: step 1/5. Catalyzes the phosphorylation of pantothenate (Pan), the first step in CoA biosynthesis. The chain is Type III pantothenate kinase from Nitratidesulfovibrio vulgaris (strain ATCC 29579 / DSM 644 / CCUG 34227 / NCIMB 8303 / VKM B-1760 / Hildenborough) (Desulfovibrio vulgaris).